Reading from the N-terminus, the 180-residue chain is Inner membrane-spanning protein YciB (180 aa).

6 helical membrane passes run 4–24 (FLSEIGPVIAFFAGFFYGGGI), 25–45 (QHATLYMLITSVICITLCYVI), 49–69 (VSKLSIISTTVLLVSGSITLI), 76–96 (IKIKPTILYVIFGIIFLMSGI), 118–138 (ITLSYRTAAFFFFMAVVNEVV), and 150–170 (FKVFGVIPITFIFILLQLPLL).

Belongs to the YciB family.

The protein localises to the cell inner membrane. Its function is as follows. Plays a role in cell envelope biogenesis, maintenance of cell envelope integrity and membrane homeostasis. In Rickettsia rickettsii (strain Iowa), this protein is Inner membrane-spanning protein YciB.